A 31-amino-acid polypeptide reads, in one-letter code: Histone H1.3 (31 aa).

This sequence belongs to the histone H1/H5 family.

The protein localises to the nucleus. It is found in the chromosome. Functionally, histones H1 are necessary for the condensation of nucleosome chains into higher-order structures. The sequence is that of Histone H1.3 from Triticum aestivum (Wheat).